Consider the following 26-residue polypeptide: Coenzyme PQQ synthesis protein A (26 aa).

Residues 16–20 constitute a cross-link (pyrroloquinoline quinone (Glu-Tyr)); sequence EINMY.

The protein belongs to the PqqA family.

It participates in cofactor biosynthesis; pyrroloquinoline quinone biosynthesis. Required for coenzyme pyrroloquinoline quinone (PQQ) biosynthesis. PQQ is probably formed by cross-linking a specific glutamate to a specific tyrosine residue and excising these residues from the peptide. The protein is Coenzyme PQQ synthesis protein A of Cereibacter sphaeroides (strain ATCC 17029 / ATH 2.4.9) (Rhodobacter sphaeroides).